Consider the following 379-residue polypeptide: MNQAVIVAAKRTAFGKYGGTLKHLEPEQLLKPLFQHFKEKYPEVISKIDDVVLGNVVGNGGNIARKALLEAGLKDSIPGVTIDRQCGSGLESVQYACRMIQAGAGKVYIAGGVESTSRAPWKIKRPHSVYETALPEFYERASFAPEMSDPSMIQGAENVAKMYDVSRELQDEFAYRSHQLTAENVKNGNISQEILPITVKGEIFNTDESLKSHIPKDNFGRFKPVIKGGTVTAANSCMKNDGAVLLLIMEKDMAYELGFEHGLLFKDGVTVGVDSNFPGIGPVPAISNLLKRNQLTIENIEVIEINEAFSAQVVACQQALNISNTQLNIWGGALASGHPYGASGAQLVTRLFYMFDKETMIASMGIGGGLGNAALFTRF.

The Acyl-thioester intermediate role is filled by Cys86. Residue His338 is the Proton acceptor of the active site.

Belongs to the thiolase-like superfamily. Thiolase family.

In Staphylococcus aureus (strain Mu3 / ATCC 700698), this protein is Putative acetyl-CoA C-acetyltransferase VraB (vraB).